A 661-amino-acid polypeptide reads, in one-letter code: Probable urea active transporter 3 (661 aa).

15 helical membrane-spanning segments follow: residues 13–33 (GIVIGLGFAFAIVMILVTYVL), 56–76 (GLISSAVVSSWTWPGTLLTSA), 86–106 (GSMWYSFAFTVQITFFTVIAL), 132–152 (AVFLFYALGTNIIVSAMLLLG), 165–185 (VVAAGFLLPLGVWLYTVSGGL), 197–217 (VIVYIVILITLFVAYTSSVHI), 251–271 (AVFVGWNIVIGGFATVFCDPS), 288–308 (YFAGGLAWLIVPWAMGSAAAL), 352–372 (AGVLILFMASTSATSAELVAF), 397–417 (VTHVFVTIFAVCMGALAVLFN), 419–439 (IGITISWIITFIGIALGPAVF), 454–474 (GMIIGCPMGSITGVVCWVGSC), 495–515 (VGNFTGLFSGLIYIVLISYFF), 556–576 (IGIFVSWIIFFILVIIVPLPM), and 591–611 (WIIVIIIWTLIAALYITFYPL).

It belongs to the sodium:solute symporter (SSF) (TC 2.A.21) family.

Its subcellular location is the membrane. It is found in the golgi apparatus membrane. Involved in active transport of urea. The protein is Probable urea active transporter 3 (dur3-3) of Schizosaccharomyces pombe (strain 972 / ATCC 24843) (Fission yeast).